Consider the following 92-residue polypeptide: Neurophysin 2 (92 aa).

Cystine bridges form between cysteine 7–cysteine 51, cysteine 10–cysteine 24, cysteine 18–cysteine 41, cysteine 25–cysteine 31, cysteine 58–cysteine 70, cysteine 64–cysteine 82, and cysteine 71–cysteine 76.

Belongs to the vasopressin/oxytocin family.

It is found in the secreted. In terms of biological role, neurophysin 2 specifically binds the midbrain peptide hormone vasopressin. This is Neurophysin 2 (AVP) from Equus caballus (Horse).